Here is a 369-residue protein sequence, read N- to C-terminus: 3-methylarginine biosynthesis aminotransferase ArgM (369 aa).

At K216 the chain carries N6-(pyridoxal phosphate)lysine.

The protein belongs to the class-I pyridoxal-phosphate-dependent aminotransferase family. Pyridoxal 5'-phosphate serves as cofactor.

The enzyme catalyses L-arginine + 2-oxoglutarate = 5-guanidino-2-oxopentanoate + L-glutamate. It carries out the reaction (3R)-5-guanidino-3-methyl-2-oxopentanoate + L-aspartate = (3R)-3-methyl-L-arginine + oxaloacetate. It participates in antibiotic biosynthesis. Its function is as follows. Aminotransferase involved in the formation of the rare amino acid 3-methylarginine (MeArg), which is incorporated into the peptidyl nucleoside antibiotic arginomycin. Catalyzes two rounds of transamination: the transfer of the amino group from L-arginine to 2-oxoglutarate to give glutamate and 5-guanidino-2-oxopentanoic acid, which will be methylated by ArgN. Then, ArgM specifically catalyzes transamination from the donor L-aspartate to the 5-guanidino-3-methyl-2-oxopentanoic acid produced by ArgN, generating the final product, 3-methylarginine. Cannot use arginine analogs, such as D-arginine, L-homoarginine and N-methylarginine for the first transamination. The protein is 3-methylarginine biosynthesis aminotransferase ArgM of Streptomyces arginensis.